A 326-amino-acid chain; its full sequence is Cytosolic sulfotransferase 12 (326 aa).

75–80 (KSGTTW) contacts 3'-phosphoadenylyl sulfate. His140 acts as the Proton acceptor in catalysis. 3'-phosphoadenylyl sulfate contacts are provided by residues Arg162, Ser170, Tyr228, and 290 to 292 (RKG).

The protein belongs to the sulfotransferase 1 family. In terms of assembly, dimer. Expressed in the aerial parts of seedlings, in roots, leaves and flowers. Not detected in stems and siliques.

It localises to the cytoplasm. Functionally, sulfotransferase that utilizes 3'-phospho-5'-adenylyl sulfate (PAPS) as sulfonate donor to catalyze the stereospecific sulfate conjugation of 24-epibrassinosteroids. Preferred substrates are 24-epicathasterone and 6-deoxo-24-epicathasterone. Low activity with 22-deoxy-24-epiteasterone. No activity with 24-epimers catasterone and brassinolide. Sulfonates salicylic acid. May be involved in detoxification. Enhances plant response to pathogen infection and contributes to long distance signaling in systemic acquired resistance (SAR). This Arabidopsis thaliana (Mouse-ear cress) protein is Cytosolic sulfotransferase 12 (SOT12).